A 348-amino-acid polypeptide reads, in one-letter code: sn-glycerol-3-phosphate import ATP-binding protein UgpC (348 aa).

Residues 4-235 enclose the ABC transporter domain; that stretch reads IQLSNIKKQY…PETTFVADFI (232 aa). 37-44 contacts ATP; it reads GPSGCGKS.

The protein belongs to the ABC transporter superfamily. sn-glycerol-3-phosphate importer (TC 3.A.1.1.3) family. As to quaternary structure, the complex is composed of two ATP-binding proteins (UgpC), two transmembrane proteins (UgpA and UgpE) and a solute-binding protein (UgpB).

The protein localises to the cell inner membrane. The catalysed reaction is sn-glycerol 3-phosphate(out) + ATP + H2O = sn-glycerol 3-phosphate(in) + ADP + phosphate + H(+). Its function is as follows. Part of the ABC transporter complex UgpBAEC involved in sn-glycerol-3-phosphate (G3P) import. Responsible for energy coupling to the transport system. The protein is sn-glycerol-3-phosphate import ATP-binding protein UgpC of Bartonella quintana (strain Toulouse) (Rochalimaea quintana).